The chain runs to 435 residues: ATP-dependent protease ATPase subunit HslU (435 aa).

Residues V18, 60 to 65 (GCGKTE), D248, E313, and R385 contribute to the ATP site.

The protein belongs to the ClpX chaperone family. HslU subfamily. As to quaternary structure, a double ring-shaped homohexamer of HslV is capped on each side by a ring-shaped HslU homohexamer. The assembly of the HslU/HslV complex is dependent on binding of ATP.

Its subcellular location is the cytoplasm. Functionally, ATPase subunit of a proteasome-like degradation complex; this subunit has chaperone activity. The binding of ATP and its subsequent hydrolysis by HslU are essential for unfolding of protein substrates subsequently hydrolyzed by HslV. HslU recognizes the N-terminal part of its protein substrates and unfolds these before they are guided to HslV for hydrolysis. This is ATP-dependent protease ATPase subunit HslU from Beijerinckia indica subsp. indica (strain ATCC 9039 / DSM 1715 / NCIMB 8712).